The sequence spans 306 residues: Putative syntaxin-131 (306 aa).

At M1 the chain carries N-acetylmethionine. Residues 1-276 are Cytoplasmic-facing; that stretch reads MNDLLKGSLE…AVKSQKSSRK (276 aa). The span at 11-23 shows a compositional bias: basic and acidic residues; the sequence is FSRDRSNRSDIES. Residues 11–35 form a disordered region; that stretch reads FSRDRSNRSDIESGHGPGNSGDLGL. 2 coiled-coil regions span residues 35–72 and 134–162; these read LSGFFKKVQEIEKQYEKLDKHLNKLQGAHEETKAVTKA and KKKFKDKISEFQTLRQNIQQEYREVVERR. A t-SNARE coiled-coil homology domain is found at 205 to 267; it reads LAEIQERHDA…QSGNNQLTKA (63 aa). A helical; Anchor for type IV membrane protein membrane pass occupies residues 277 to 297; the sequence is WMCIAILILLIIIIITVISVL. The Vesicular portion of the chain corresponds to 298–306; it reads KPWTQKNGA.

This sequence belongs to the syntaxin family. As to quaternary structure, part of the t-SNARE complex.

Its subcellular location is the membrane. Functionally, vesicle trafficking protein that functions in the secretory pathway. This is Putative syntaxin-131 (SYP131) from Arabidopsis thaliana (Mouse-ear cress).